A 264-amino-acid chain; its full sequence is Cysteine-rich repeat secretory protein 26 (264 aa).

Positions Met1 to Ser27 are cleaved as a signal peptide. Gnk2-homologous domains lie at Tyr34 to Ser142 and Tyr148 to Phe261.

Belongs to the cysteine-rich repeat secretory protein family.

It localises to the secreted. The protein is Cysteine-rich repeat secretory protein 26 (CRRSP26) of Arabidopsis thaliana (Mouse-ear cress).